The sequence spans 44 residues: Somatoliberin (44 aa).

Leu-44 bears the Leucine amide mark.

It belongs to the glucagon family.

It is found in the secreted. Functionally, GRF is released by the hypothalamus and acts on the adenohypophyse to stimulate the secretion of growth hormone. In Sus scrofa (Pig), this protein is Somatoliberin (GHRH).